Consider the following 245-residue polypeptide: 5-oxoprolinase subunit A (245 aa).

It belongs to the LamB/PxpA family. In terms of assembly, forms a complex composed of PxpA, PxpB and PxpC.

It carries out the reaction 5-oxo-L-proline + ATP + 2 H2O = L-glutamate + ADP + phosphate + H(+). Its function is as follows. Catalyzes the cleavage of 5-oxoproline to form L-glutamate coupled to the hydrolysis of ATP to ADP and inorganic phosphate. In Haemophilus influenzae (strain PittGG), this protein is 5-oxoprolinase subunit A.